Consider the following 224-residue polypeptide: Uracil-DNA glycosylase 2 (224 aa).

D64 serves as the catalytic Proton acceptor.

Belongs to the uracil-DNA glycosylase (UDG) superfamily. UNG family.

It localises to the cytoplasm. It catalyses the reaction Hydrolyzes single-stranded DNA or mismatched double-stranded DNA and polynucleotides, releasing free uracil.. In terms of biological role, excises uracil residues from the DNA which can arise as a result of misincorporation of dUMP residues by DNA polymerase or due to deamination of cytosine. The chain is Uracil-DNA glycosylase 2 from Listeria innocua serovar 6a (strain ATCC BAA-680 / CLIP 11262).